A 227-amino-acid polypeptide reads, in one-letter code: [D-Ala2]-deltorphins (227 aa).

The N-terminal stretch at 1–20 (MSFLKKSLLLVLFLGLVSHS) is a signal peptide. Residues 21-46 (VCKEEKRETEEENENEEENHEVGSEM) constitute a propeptide that is removed on maturation. A disordered region spans residues 22-227 (CKEEKRETEE…DVVGGEAKKM (206 aa)). Residues 30 to 39 (EEENENEEEN) are compositionally biased toward acidic residues. Residue alanine 50 is modified to D-alanine (Ala). Residues 57–75 (DTEEKNENEEENQEEGSEM) constitute a propeptide that is removed on maturation. Residues 62–72 (NENEEENQEEG) show a composition bias toward acidic residues. Over residues 73–87 (SEMKRYAFGYPKREP) the composition is skewed to basic and acidic residues. Alanine 79 is subject to D-alanine (Ala). Positions 86–104 (EPEEENENEEENHEEGSEM) are excised as a propeptide. Positions 88-98 (EEENENEEENH) are enriched in acidic residues. The span at 99–108 (EEGSEMKRYA) shows a compositional bias: basic and acidic residues. Alanine 108 is modified (D-alanine (Ala)). Glycine 113 is subject to Glycine amide. The propeptide occupies 115–140 (EAKKMKREPEEENENEEENHEEGSEM). The span at 124-134 (EEENENEEENH) shows a compositional bias: acidic residues. Residues 135–144 (EEGSEMKRYA) are compositionally biased toward basic and acidic residues. The residue at position 144 (alanine 144) is a D-alanine (Ala). Glycine 149 is modified (glycine amide). The propeptide occupies 151 to 176 (EAKKMKREPEEENENEEENHEEGSEM). Acidic residues predominate over residues 160–170 (EEENENEEENH). Residues 171–180 (EEGSEMKRYA) show a composition bias toward basic and acidic residues. Alanine 180 is modified (D-alanine (Ala)). Glycine amide is present on glycine 185. A propeptide spanning residues 187 to 212 (EAKKMKREPEEENENEEENHEEGSEM) is cleaved from the precursor. Positions 196–206 (EEENENEEENH) are enriched in acidic residues. Positions 207-216 (EEGSEMKRYA) are enriched in basic and acidic residues. Residue alanine 216 is modified to D-alanine (Ala). At glycine 221 the chain carries Glycine amide. Residues 223-227 (EAKKM) constitute a propeptide that is removed on maturation.

This sequence belongs to the frog skin active peptide (FSAP) family. Dermorphin subfamily. In terms of tissue distribution, expressed by the skin glands.

It localises to the secreted. In terms of biological role, deltorphin is a heptapeptide with a very potent opiate-like activity. Has high affinity and selectivity for delta-type opioid receptors. The two dermorphin-like peptides have a similar affinity and selectivity for the mu opioid receptor as dermorphin. The protein is [D-Ala2]-deltorphins of Phyllomedusa bicolor (Two-colored leaf frog).